The sequence spans 291 residues: Lectin (291 aa).

Residues 1 to 28 (MGISKKSQLVPLLAFITMFLMVVSRVSS) form the signal peptide. Aspartate 118 provides a ligand contact to Ca(2+). Arginine 138 is a binding site for a carbohydrate. A propeptide spans 147–162 (NIIKNSTNLDFNAAYN) (removed in mature form). The Mn(2+) site is built by glutamate 170 and aspartate 172. Positions 172, 174, 176, and 181 each coordinate Ca(2+). Tyrosine 174 contributes to the a carbohydrate binding site. Mn(2+) contacts are provided by aspartate 181 and histidine 186. Lysine 208 is a binding site for Ca(2+). Serine 228 provides a ligand contact to a carbohydrate. Residues 281–291 (QLQDLRIASVV) constitute a propeptide, removed in mature form.

The protein belongs to the leguminous lectin family. The mature chain consists of residues 163-280 followed by residues 29-147. Concanavalin A-like lectins of the Diocleinae subtribe undergo proteolytic processing referred to as circular permutation. The propeptide is split into an N-terminal and a C-terminal part, the gamma and beta chain, respectively. These are then religated in beta-gamma order to form the mature alpha chain. The beta and gamma chains can often be detected in cell extracts.

D-mannose-binding lectin that also binds alpha-methyl-D-mannoside with even higher affinity. Has hemagglutinating activity against rabbit erythrocytes. Shows toxicity against the brine shrimp A.nauplii. Induces reversible paw edema and hypernociceptivity in rats. This Dioclea lasiophylla protein is Lectin.